A 461-amino-acid polypeptide reads, in one-letter code: 26S proteasome regulatory subunit 8 (461 aa).

Position 185–192 (Gly185–Thr192) interacts with ATP.

It belongs to the AAA ATPase family.

It is found in the cytoplasm. The protein resides in the nucleus. Its function is as follows. The 26S proteasome is involved in the ATP-dependent degradation of ubiquitinated proteins. The regulatory (or ATPase) complex confers ATP dependency and substrate specificity to the 26S complex. This chain is 26S proteasome regulatory subunit 8 (psmc5), found in Xenopus laevis (African clawed frog).